A 454-amino-acid chain; its full sequence is ESX-1 secretion-associated protein EspB (454 aa).

Disordered stretches follow at residues 17–40, 82–128, and 391–454; these read RADEVEAPMATPPTDVPQAPSGLT, GEVE…AGES, and AGQG…QDNK. The span at 391–422 shows a compositional bias: gly residues; sequence AGQGGGAAGRGMAGGGMGMPMGGAGQGQGGAK.

Belongs to the EspB family. In terms of processing, cleaved at close to the C-terminus during secretion.

Its subcellular location is the secreted. The sequence is that of ESX-1 secretion-associated protein EspB from Mycobacterium marinum (strain ATCC BAA-535 / M).